The primary structure comprises 103 residues: Co-chaperonin GroES (103 aa).

Belongs to the GroES chaperonin family. Heptamer of 7 subunits arranged in a ring. Interacts with the chaperonin GroEL.

It localises to the cytoplasm. Functionally, together with the chaperonin GroEL, plays an essential role in assisting protein folding. The GroEL-GroES system forms a nano-cage that allows encapsulation of the non-native substrate proteins and provides a physical environment optimized to promote and accelerate protein folding. GroES binds to the apical surface of the GroEL ring, thereby capping the opening of the GroEL channel. This chain is Co-chaperonin GroES, found in Prochlorococcus marinus (strain MIT 9515).